The following is a 133-amino-acid chain: Protein msa (133 aa).

4 helical membrane passes run 3-23, 27-47, 55-75, and 103-123; these read YLIL…AIGL, ILAA…ILFF, YIFF…VHLM, and FGFD…IVLY.

Its subcellular location is the cell membrane. In terms of biological role, accessory element involved in the expression of sarA and several virulence factors. Modulates SarA production and/or function in a strain-dependent manner. Affects the transcription of the accessory gene regulator (agr) and genes encoding virulence factors including alpha toxin (hla) and protein A (spa). This is Protein msa (msa) from Staphylococcus aureus (strain USA300).